Here is an 803-residue protein sequence, read N- to C-terminus: Volume-regulated anion channel subunit LRRC8C (803 aa).

At 1 to 22 the chain is on the cytoplasmic side; sequence MIPVTEFRQFSEQQPAFRVLKP. Residues 23 to 43 form a helical membrane-spanning segment; that stretch reads WWDVFTDYLSVAMLMIGVFGC. The Extracellular portion of the chain corresponds to 44–125; that stretch reads TLQVMQDKII…YERALHWYAK (82 aa). Intrachain disulfides connect C54-C308 and C115-C293. N-linked (GlcNAc...) asparagine glycosylation is found at N64 and N70. Residues 126-146 traverse the membrane as a helical segment; sequence YFPYLVLIHTLVFMLCSNFWF. The Cytoplasmic portion of the chain corresponds to 147–266; sequence KFPGSSSKIE…ILYAMYVRQT (120 aa). Positions 177–211 are disordered; it reads EVSGEDSEEKDNRKNNMNRSNTIQSGPEGSLVKSQ. Positions 191-211 are enriched in polar residues; that stretch reads NNMNRSNTIQSGPEGSLVKSQ. Residues S212 and S215 each carry the phosphoserine modification. The chain crosses the membrane as a helical span at residues 267-287; the sequence is VLKVIKFLIIIAYNSALVSKV. At 288–320 the chain is on the extracellular side; it reads QFTVDCNVDIQDMTGYKNFSCNHTMAHLFSKLS. The helical transmembrane segment at 321-341 threads the bilayer; that stretch reads FCYLCFVSIYGLTCLYTLYWL. The Cytoplasmic portion of the chain corresponds to 342-803; the sequence is FYRSLREYSF…SDVREQMKAD (462 aa). 17 LRR repeats span residues 397–420, 421–443, 446–466, 467–488, 490–513, 515–537, 541–563, 565–587, 588–611, 613–635, 637–659, 660–682, 684–705, 706–728, 730–751, 752–774, and 776–799; these read ENKL…KLQT, NAHN…VFEI, LQSL…IAQL, DNLQ…ALSF, KENL…MYGL, NLEE…TLES, LKSL…VVDV, SHLQ…NLKK, MTNL…VFSL, SLQE…SFQH, RKLT…IKKL, TSLE…LFLC, KIRY…IGVL, QSLQ…LYFC, KLKT…IGNL, LFLS…LGDC, and ALKR…VREQ.

This sequence belongs to the LRRC8 family. In terms of assembly, heterohexamer; oligomerizes with other LRRC8 proteins (LRRC8A, LRRC8B, LRRC8D and/or LRRC8E) to form a heterohexamer. Homoheptamer; inactive, likely because it is not targeted to the plasma membrane in the absence of LRRC8A. In vivo, the subunit composition may depend primarily on expression levels, and heterooligomeric channels containing various proportions of the different LRRC8 proteins may coexist.

It localises to the cell membrane. The protein localises to the endoplasmic reticulum membrane. It carries out the reaction chloride(in) = chloride(out). The enzyme catalyses iodide(out) = iodide(in). It catalyses the reaction taurine(out) = taurine(in). The catalysed reaction is 2',3'-cGAMP(out) = 2',3'-cGAMP(in). Non-essential component of the volume-regulated anion channel (VRAC, also named VSOAC channel), an anion channel required to maintain a constant cell volume in response to extracellular or intracellular osmotic changes. The VRAC channel conducts iodide better than chloride and can also conduct organic osmolytes like taurine. Plays a redundant role in the efflux of amino acids, such as aspartate and glutamate, in response to osmotic stress. The VRAC channel also mediates transport of immunoreactive cyclic dinucleotide GMP-AMP (2'-3'-cGAMP), an immune messenger produced in response to DNA virus in the cytosol. Channel activity requires LRRC8A plus at least one other family member (LRRC8B, LRRC8C, LRRC8D or LRRC8E); channel characteristics depend on the precise subunit composition. This is Volume-regulated anion channel subunit LRRC8C from Rattus norvegicus (Rat).